The following is a 152-amino-acid chain: D-aminoacyl-tRNA deacylase (152 aa).

Positions 142–143 (GP) match the Gly-cisPro motif, important for rejection of L-amino acids motif.

This sequence belongs to the DTD family. In terms of assembly, homodimer.

The protein localises to the cytoplasm. The enzyme catalyses glycyl-tRNA(Ala) + H2O = tRNA(Ala) + glycine + H(+). It carries out the reaction a D-aminoacyl-tRNA + H2O = a tRNA + a D-alpha-amino acid + H(+). Its function is as follows. An aminoacyl-tRNA editing enzyme that deacylates mischarged D-aminoacyl-tRNAs. Also deacylates mischarged glycyl-tRNA(Ala), protecting cells against glycine mischarging by AlaRS. Acts via tRNA-based rather than protein-based catalysis; rejects L-amino acids rather than detecting D-amino acids in the active site. By recycling D-aminoacyl-tRNA to D-amino acids and free tRNA molecules, this enzyme counteracts the toxicity associated with the formation of D-aminoacyl-tRNA entities in vivo and helps enforce protein L-homochirality. The polypeptide is D-aminoacyl-tRNA deacylase (Paraburkholderia phymatum (strain DSM 17167 / CIP 108236 / LMG 21445 / STM815) (Burkholderia phymatum)).